The primary structure comprises 652 residues: Acetolactate synthase 3, chloroplastic (652 aa).

Residues 1-20 are compositionally biased toward polar residues; that stretch reads MAAATSSSPISLTAKPSSKS. The interval 1–23 is disordered; sequence MAAATSSSPISLTAKPSSKSPLP. The N-terminal 69 residues, 1–69, are a transit peptide targeting the chloroplast; it reads MAAATSSSPI…PEKTDKIKTF (69 aa). E126 serves as a coordination point for thiamine diphosphate. FAD-binding positions include R228, 334 to 355, and 377 to 396; these read HGTVYANYAVEHSDLLLAFGVR and DIDSAEIGKNKTPHVSVCGD. Residues 469-549 are thiamine pyrophosphate binding; it reads QHQMWAAQFY…VKILLLNNQH (81 aa). Mg(2+) contacts are provided by D520 and N547.

Belongs to the TPP enzyme family. The cofactor is Mg(2+). Requires thiamine diphosphate as cofactor.

The protein localises to the plastid. The protein resides in the chloroplast. The enzyme catalyses 2 pyruvate + H(+) = (2S)-2-acetolactate + CO2. It participates in amino-acid biosynthesis; L-isoleucine biosynthesis; L-isoleucine from 2-oxobutanoate: step 1/4. Its pathway is amino-acid biosynthesis; L-valine biosynthesis; L-valine from pyruvate: step 1/4. In Brassica napus (Rape), this protein is Acetolactate synthase 3, chloroplastic.